The chain runs to 557 residues: Cytochrome P450 734A2 (557 aa).

The chain crosses the membrane as a helical span at residues 13–35 (WATWRVAAVAAAAAVWVTMHVAA). Residue C495 participates in heme binding.

The protein belongs to the cytochrome P450 family. The cofactor is heme. Expressed in roots, shoot apex, leaf sheaths and leaf blades.

The protein localises to the membrane. Cytochrome P450 involved in brassinosteroids (BRs) inactivation and regulation of BRs homeostasis. Is a multifunctional and multisubstrate enzyme that controls the endogenous bioactive BR content both by direct inactivation of castasterone (CS) and by decreasing the levels of BR precursors. Catalyzes the oxidation of carbon 22 hydroxylated BR intermediates to produce C26 oxidized metabolites. In Oryza sativa subsp. japonica (Rice), this protein is Cytochrome P450 734A2 (CYP734A2).